The chain runs to 697 residues: Sialidase B (697 aa).

The N-terminal stretch at 1–29 (MNKRGLYSKLGISVVGISLLMGVPTLIHA) is a signal peptide. Arginine 245 provides a ligand contact to substrate. Aspartate 270 functions as the Proton acceptor in the catalytic mechanism. 3 BNR repeats span residues 280–291 (SYSDDNGKTWSE), 462–473 (TTSQNRGESWEQ), and 517–528 (LISDDSGQTWKK). Glutamate 541 is a catalytic residue. Arginine 557 is a binding site for substrate. The BNR 4 repeat unit spans residues 566–577 (MTSRDSGETWSK). Substrate is bound at residue arginine 619. Residue tyrosine 653 is the Nucleophile of the active site.

Belongs to the glycosyl hydrolase 33 family.

It catalyses the reaction Hydrolysis of alpha-(2-&gt;3)-, alpha-(2-&gt;6)-, alpha-(2-&gt;8)- glycosidic linkages of terminal sialic acid residues in oligosaccharides, glycoproteins, glycolipids, colominic acid and synthetic substrates.. The chain is Sialidase B (nanB) from Streptococcus pneumoniae serotype 4 (strain ATCC BAA-334 / TIGR4).